Here is a 255-residue protein sequence, read N- to C-terminus: Type III pantothenate kinase (255 aa).

D12 to K19 lines the ATP pocket. G109–L112 serves as a coordination point for substrate. D111 (proton acceptor) is an active-site residue. T133 contacts ATP. A substrate-binding site is contributed by T185.

Belongs to the type III pantothenate kinase family. Homodimer. NH4(+) serves as cofactor. It depends on K(+) as a cofactor.

The protein resides in the cytoplasm. The catalysed reaction is (R)-pantothenate + ATP = (R)-4'-phosphopantothenate + ADP + H(+). Its pathway is cofactor biosynthesis; coenzyme A biosynthesis; CoA from (R)-pantothenate: step 1/5. Functionally, catalyzes the phosphorylation of pantothenate (Pan), the first step in CoA biosynthesis. The sequence is that of Type III pantothenate kinase from Malacoplasma penetrans (strain HF-2) (Mycoplasma penetrans).